A 122-amino-acid chain; its full sequence is Small ribosomal subunit protein uS13 (122 aa).

A disordered region spans residues 95–122 (GLPVRGQRTHTNARTRKGPAKSIAGKKK).

Belongs to the universal ribosomal protein uS13 family. In terms of assembly, part of the 30S ribosomal subunit. Forms a loose heterodimer with protein S19. Forms two bridges to the 50S subunit in the 70S ribosome.

Located at the top of the head of the 30S subunit, it contacts several helices of the 16S rRNA. In the 70S ribosome it contacts the 23S rRNA (bridge B1a) and protein L5 of the 50S subunit (bridge B1b), connecting the 2 subunits; these bridges are implicated in subunit movement. Contacts the tRNAs in the A and P-sites. This chain is Small ribosomal subunit protein uS13, found in Nitrobacter winogradskyi (strain ATCC 25391 / DSM 10237 / CIP 104748 / NCIMB 11846 / Nb-255).